The sequence spans 128 residues: Large ribosomal subunit protein bL17 (128 aa).

The protein belongs to the bacterial ribosomal protein bL17 family. In terms of assembly, part of the 50S ribosomal subunit. Contacts protein L32.

This chain is Large ribosomal subunit protein bL17, found in Streptococcus pyogenes serotype M5 (strain Manfredo).